Here is an 88-residue protein sequence, read N- to C-terminus: Small ribosomal subunit protein bS20 (88 aa).

Belongs to the bacterial ribosomal protein bS20 family.

Functionally, binds directly to 16S ribosomal RNA. The chain is Small ribosomal subunit protein bS20 from Clostridioides difficile (strain 630) (Peptoclostridium difficile).